Consider the following 492-residue polypeptide: Trypanothione reductase (492 aa).

35–52 lines the FAD pocket; it reads DVQTVHGPPFFAALGGTC. Cysteine 52 and cysteine 57 are disulfide-bonded. Histidine 461 functions as the Proton acceptor in the catalytic mechanism.

This sequence belongs to the class-I pyridine nucleotide-disulfide oxidoreductase family. In terms of assembly, homodimer. It depends on FAD as a cofactor.

The protein resides in the cytoplasm. The enzyme catalyses trypanothione + NADP(+) = trypanothione disulfide + NADPH + H(+). In terms of biological role, trypanothione is the parasite analog of glutathione; this enzyme is the equivalent of glutathione reductase. This chain is Trypanothione reductase (TPR), found in Trypanosoma congolense.